Reading from the N-terminus, the 484-residue chain is HSPB1-associated protein 1 (484 aa).

The disordered stretch occupies residues 1-26; sequence MAARPGAITNADSASGGGEEEGKHVK. Residues 88 to 208 form an interaction with HSPB1 region; the sequence is ETACNYVEAT…EDTPFLYPTR (121 aa). In terms of domain architecture, JmjC spans 124 to 288; it reads WAYADYKYFV…HQTRVEEAIT (165 aa). The interval 396–429 is disordered; sequence TPSSEEPSSERGGIFENDGEDFVSKNGKSFGKRQ.

In terms of assembly, interacts with CRYAB and HSPB1.

The protein resides in the cytoplasm. May play a role in cellular stress response. The polypeptide is HSPB1-associated protein 1 (HSPBAP1) (Bos taurus (Bovine)).